Consider the following 72-residue polypeptide: Large ribosomal subunit protein uL29 (72 aa).

It belongs to the universal ribosomal protein uL29 family.

This Thermus thermophilus (strain ATCC BAA-163 / DSM 7039 / HB27) protein is Large ribosomal subunit protein uL29.